The primary structure comprises 509 residues: ATP synthase subunit alpha, mitochondrial (509 aa).

171-178 provides a ligand contact to ATP; the sequence is GDRQTGKT.

This sequence belongs to the ATPase alpha/beta chains family. As to quaternary structure, F-type ATPases have 2 components, CF(1) - the catalytic core - and CF(0) - the membrane proton channel. CF(1) has five subunits: alpha(3), beta(3), gamma(1), delta(1), epsilon(1). CF(0) has three main subunits: a, b and c.

The protein resides in the mitochondrion. It is found in the mitochondrion inner membrane. Its function is as follows. Mitochondrial membrane ATP synthase (F(1)F(0) ATP synthase or Complex V) produces ATP from ADP in the presence of a proton gradient across the membrane which is generated by electron transport complexes of the respiratory chain. F-type ATPases consist of two structural domains, F(1) - containing the extramembraneous catalytic core, and F(0) - containing the membrane proton channel, linked together by a central stalk and a peripheral stalk. During catalysis, ATP synthesis in the catalytic domain of F(1) is coupled via a rotary mechanism of the central stalk subunits to proton translocation. Subunits alpha and beta form the catalytic core in F(1). Rotation of the central stalk against the surrounding alpha(3)beta(3) subunits leads to hydrolysis of ATP in three separate catalytic sites on the beta subunits. Subunit alpha does not bear the catalytic high-affinity ATP-binding sites. This chain is ATP synthase subunit alpha, mitochondrial (ATPA), found in Triticum aestivum (Wheat).